The primary structure comprises 500 residues: Polyamine oxidase 1 (500 aa).

Residues 1–28 form the signal peptide; it reads MSSSPSFGLLAVAALLLALSLAQHGSLA. FAD contacts are provided by residues 42 to 43, E63, R71, and 87 to 88; these read MS and NW. E90 serves as a coordination point for substrate. N105 carries N-linked (GlcNAc...) asparagine glycosylation. Residue E198 participates in substrate binding. The FAD site is built by V265, Y427, and E458. G466 provides a ligand contact to substrate. 467–468 contributes to the FAD binding site; sequence YV. A disulfide bridge connects residues C485 and C491.

Belongs to the flavin monoamine oxidase family. In terms of assembly, monomer. The cofactor is FAD.

It is found in the secreted. The protein localises to the extracellular space. It localises to the apoplast. Its subcellular location is the cell wall. The catalysed reaction is spermidine + O2 + H2O = 4-aminobutanal + propane-1,3-diamine + H2O2. The enzyme catalyses N(8)-acetylspermidine + O2 + H2O = 4-acetamidobutanal + propane-1,3-diamine + H2O2. It carries out the reaction spermine + O2 + H2O = N-(3-aminopropyl)-4-aminobutanal + propane-1,3-diamine + H2O2. It catalyses the reaction N(1)-acetylspermine + O2 + H2O = N-(3-acetamidopropyl)-4-aminobutanal + propane-1,3-diamine + H2O2. The protein operates within amine and polyamine degradation; spermine degradation. In terms of biological role, flavoenzyme involved in polyamine back-conversion. Catalyzes the oxidation of the secondary amino group of polyamines, such as spermine, spermidine and their acetyl derivatives. Plays an important role in the regulation of polyamine intracellular concentration. This Zea mays (Maize) protein is Polyamine oxidase 1.